We begin with the raw amino-acid sequence, 587 residues long: Chaperonin CPN60, mitochondrial (587 aa).

A mitochondrion-targeting transit peptide spans 1–32 (MYRLISSIASKARVARNCTSQIGSRLSSTRNY).

Belongs to the chaperonin (HSP60) family.

The protein resides in the mitochondrion. Functionally, implicated in mitochondrial protein import and macromolecular assembly. May facilitate the correct folding of imported proteins. May also prevent misfolding and promote the refolding and proper assembly of unfolded polypeptides generated under stress conditions in the mitochondrial matrix. In Brassica napus (Rape), this protein is Chaperonin CPN60, mitochondrial.